The chain runs to 216 residues: MTTKGILGKKVGMTQVFTDAGELIPVTVVEATPNVVLQVKTMENDGYNAIQLGYQDKREVLSNKPEQGHVAKANTTPKRFIREFTDVELGDYKVADEVKVDTFQAGDIVDVTGVTKGHGYQGNIHKDGQSRGPMAHGSRYHRRPGSLGAIINRVFPGMKLPGRMGNKQVTIQNLVIVKADVENNVLLIKGNVPGANKSLVTVKSAVRPPRPKQSEK.

The interval 119–143 (GYQGNIHKDGQSRGPMAHGSRYHRR) is disordered.

The protein belongs to the universal ribosomal protein uL3 family. Part of the 50S ribosomal subunit. Forms a cluster with proteins L14 and L19.

Its function is as follows. One of the primary rRNA binding proteins, it binds directly near the 3'-end of the 23S rRNA, where it nucleates assembly of the 50S subunit. This is Large ribosomal subunit protein uL3 from Levilactobacillus brevis (strain ATCC 367 / BCRC 12310 / CIP 105137 / JCM 1170 / LMG 11437 / NCIMB 947 / NCTC 947) (Lactobacillus brevis).